A 502-amino-acid polypeptide reads, in one-letter code: MASPELASHHSDPSDGEGAPFLPGVDDESPESLNSDIPFQKHSNHGLIIKLFVIYLAIGMGGPMIQSPLTRIVESIACRNYWNAHDPSQLPGPEQISEGMCKIPEVQREVTTIIGYREFFNAFLTSTFALPYGLLADRYGRKLAIRLASVGFVFNSVLSFAPIWLPNIFPLRTMWFGAVGWVLGGGPVLLFALFWSMIADATADSERDTVILRFGIATVSAGFLANVTSSFVMKFDSRVPLMTGCGLLFAGLLVANLLPETLRKKSPETTISADTSVSLTSLFFRIKKTIWSYRFICYNYPVAVILPAFFVTQLAGGSAFLVQYISIRFHRTIADATLLVALQHAFTIPVLFFILPQISERLRAYISRLQSDLLLARISVMLLALGLFGIGLSSSINTLIPSLLLHAGGAGFVLIARGLITGLARREETARLYTLIEATQSIGEVTASLYITNSLNWGLGRGGLWIGLPWLIVSFLLALIALVLGILRLPPRSENASSGSTH.

Residues 1 to 38 (MASPELASHHSDPSDGEGAPFLPGVDDESPESLNSDIP) form a disordered region. 11 helical membrane-spanning segments follow: residues 45–65 (HGLIIKLFVIYLAIGMGGPMI), 114–136 (IGYREFFNAFLTSTFALPYGLLA), 150–170 (VGFVFNSVLSFAPIWLPNIFP), 175–195 (WFGAVGWVLGGGPVLLFALFW), 214–234 (FGIATVSAGFLANVTSSFVMK), 239–259 (VPLMTGCGLLFAGLLVANLLP), 302–322 (VAVILPAFFVTQLAGGSAFLV), 336–356 (ATLLVALQHAFTIPVLFFILP), 380–400 (VMLLALGLFGIGLSSSINTLI), 403–423 (LLLHAGGAGFVLIARGLITGL), and 464–484 (LWIGLPWLIVSFLLALIALVL). Asn495 carries N-linked (GlcNAc...) asparagine glycosylation.

This sequence belongs to the major facilitator superfamily.

The protein resides in the cell membrane. In terms of biological role, MFS-rype transporer; part of the gene cluster that mediates the biosynthesis of the asperipin-2a, a bicyclic peptide that possesses two macrocyclic ether rings consisting of 14- and 17-membered paracyclophans. AprT is likely to be involved in the cellular export of asperipin-2a. In Aspergillus flavus (strain ATCC 200026 / FGSC A1120 / IAM 13836 / NRRL 3357 / JCM 12722 / SRRC 167), this protein is MFS-type transporeter aprT.